A 368-amino-acid chain; its full sequence is MASDTAPQATGAGRIVISVDAMGGDRGPAAVVAGIAGSASANPGAYFIVHGDEAQIGPMIAKRKDLRGRCEIRHAPRVVTMSDKPSQVMRHGEGTSMWSCIESVRAGEATVAVSCGNTGALMAVSMIRLRKLPGVNRPAIACLWPSRNPGGFNVMLDVGADIKADAEDLAQFALMGASYARNGLSLERPRVGLLNVGTEEHKGRAELKSAQDLISANAEAGAYEYVGFLEGGDIPGRRCDVIVTDGFTGNVALKTGEGTAKLISDFLRDAFGANVLSKMAAVLALGSLKRLQKRIDPRRVNGGVFLGLNGTVVKSHGSADATGVAAAIGLAVRLARSGFHERLAARLASAGRAGQDAPQDEVAAPRQI.

It belongs to the PlsX family. As to quaternary structure, homodimer. Probably interacts with PlsY.

Its subcellular location is the cytoplasm. The enzyme catalyses a fatty acyl-[ACP] + phosphate = an acyl phosphate + holo-[ACP]. It participates in lipid metabolism; phospholipid metabolism. Functionally, catalyzes the reversible formation of acyl-phosphate (acyl-PO(4)) from acyl-[acyl-carrier-protein] (acyl-ACP). This enzyme utilizes acyl-ACP as fatty acyl donor, but not acyl-CoA. The protein is Phosphate acyltransferase of Cereibacter sphaeroides (strain ATCC 17025 / ATH 2.4.3) (Rhodobacter sphaeroides).